The following is a 629-amino-acid chain: Probable indole-3-acetic acid-amido synthetase GH3.4 (629 aa).

It belongs to the IAA-amido conjugating enzyme family. As to expression, expressed in flowers.

In terms of biological role, may catalyze the synthesis of indole-3-acetic acid (IAA)-amino acid conjugates, providing a mechanism for the plant to cope with the presence of excess auxin. The protein is Probable indole-3-acetic acid-amido synthetase GH3.4 (GH3.4) of Oryza sativa subsp. japonica (Rice).